Consider the following 1221-residue polypeptide: Coatomer subunit alpha (1221 aa).

9 WD repeats span residues 7–46, 49–88, 91–130, 133–172, 202–241, 243–282, 285–323, 358–399, and 528–567; these read TKAS…LLEK, EHEG…CLFT, GHKD…CIAE, GHNH…KKMT, GHDR…VDTF, GHYN…TVHM, RDHD…PLFV, PSNN…SNTV, and WDDN…TGVK. The segment at 820-885 is disordered; it reads GVEQSTSTPT…DDGGWERDDL (66 aa). Residues 844 to 857 are compositionally biased toward low complexity; that stretch reads SQQQSSQQQQQQQQ. Residues 910–953 form a WD 10 repeat; the sequence is PQPGPSFSMIWARNSQFAVDHIAAGSFESAMNILNSQIGAVNFD.

In terms of assembly, oligomeric complex that consists of at least the alpha, beta, beta', gamma, delta, epsilon and zeta subunits.

The protein resides in the cytoplasm. The protein localises to the golgi apparatus membrane. Its function is as follows. The coatomer is a cytosolic protein complex that binds to dilysine motifs and reversibly associates with Golgi non-clathrin-coated vesicles, which further mediate biosynthetic protein transport from the ER, via the Golgi up to the trans Golgi network. Coatomer complex is required for budding from Golgi membranes, and is essential for the retrograde Golgi-to-ER transport of dilysine-tagged proteins. The chain is Coatomer subunit alpha (copa) from Dictyostelium discoideum (Social amoeba).